Here is a 140-residue protein sequence, read N- to C-terminus: Nucleoside diphosphate kinase (140 aa).

Lys11, Phe59, Arg87, Thr93, Arg104, and Asn114 together coordinate ATP. Residue His117 is the Pros-phosphohistidine intermediate of the active site.

It belongs to the NDK family. As to quaternary structure, homotetramer. Mg(2+) serves as cofactor.

The protein resides in the cytoplasm. The catalysed reaction is a 2'-deoxyribonucleoside 5'-diphosphate + ATP = a 2'-deoxyribonucleoside 5'-triphosphate + ADP. It catalyses the reaction a ribonucleoside 5'-diphosphate + ATP = a ribonucleoside 5'-triphosphate + ADP. Major role in the synthesis of nucleoside triphosphates other than ATP. The ATP gamma phosphate is transferred to the NDP beta phosphate via a ping-pong mechanism, using a phosphorylated active-site intermediate. In Ruegeria sp. (strain TM1040) (Silicibacter sp.), this protein is Nucleoside diphosphate kinase.